The chain runs to 211 residues: Endo-1,4-beta-xylanase A (211 aa).

The signal sequence occupies residues 1-27; that stretch reads MKVTAAFAGLLVTAFAAPVPEPVLVSR. Positions 28–210 constitute a GH11 domain; it reads SAGINYVQNY…GAGSASVTIS (183 aa). The Nucleophile role is filled by glutamate 106. The cysteines at positions 119 and 138 are disulfide-linked. Residue glutamate 197 is the Proton donor of the active site.

The protein belongs to the glycosyl hydrolase 11 (cellulase G) family.

The protein resides in the secreted. It catalyses the reaction Endohydrolysis of (1-&gt;4)-beta-D-xylosidic linkages in xylans.. It functions in the pathway glycan degradation; xylan degradation. Endo-1,4-beta-xylanase involved in the hydrolysis of xylan, a major structural heterogeneous polysaccharide found in plant biomass representing the second most abundant polysaccharide in the biosphere, after cellulose. The protein is Endo-1,4-beta-xylanase A (xynA) of Aspergillus niger.